The primary structure comprises 507 residues: E3 ubiquitin-protein ligase makorin-3 (507 aa).

Residues 1 to 21 (MEEPAAPSEAHEAAGAQAGAE) show a composition bias toward low complexity. Disordered regions lie at residues 1-48 (MEEP…DSAL) and 69-89 (RGGLRPAPASGGGAWPSPLPS). The C3H1-type 1 zinc-finger motif lies at 95-122 (WTKQIICRYYIHGQCKEGENCRYSHDLS). The interval 126 to 149 (MATEGGVSPPGASAGGGPSTAAHI) is disordered. A C3H1-type 2 zinc finger spans residues 238 to 265 (GSGLRFCYYASRGVCFRGESCMYLHGDI). A makorin-type Cys-His region spans residues 266-293 (CDMCGLQTLHPMDAAQREEHMRACIEAH). An RING-type zinc finger spans residues 311 to 365 (CGICMEVVYEKANPNDRRFGILSNCNHSFCIRCIRRWRSARQFENRIVKSCPQCR). The segment at 394–423 (AMSNKACRYFAEGRGNCPFGDTCFYKHEYP) adopts a C3H1-type 3 zinc-finger fold.

As to expression, ubiquitous.

It localises to the nucleus. The enzyme catalyses S-ubiquitinyl-[E2 ubiquitin-conjugating enzyme]-L-cysteine + [acceptor protein]-L-lysine = [E2 ubiquitin-conjugating enzyme]-L-cysteine + N(6)-ubiquitinyl-[acceptor protein]-L-lysine.. It participates in protein modification; protein ubiquitination. Functionally, E3 ubiquitin ligase catalyzing the covalent attachment of ubiquitin moieties onto substrate proteins. Acts as a key developmental timer that helps ensure puberty begins at the appropriate age, by inhibiting premature activation of the reproductive hormone cascade. Epigenetically regulates GNRH1 transcription by disrupting the binding of methyl-DNA binding protein 3/MBD3 to the promoter of GNRH1. Mechanistically, mediates the non-proteolytic ubiquitination of MBD3 at multiple sites with 'Lys27' ubiquitin linkages and thereby regulates the methylation status of the genome, including GNRH1 promoter. Modulates the stability and translation of GNRH1 mRNA by mediating the non-proteolytic ubiquitination of PABP family members PABPC1, PABPC3 and PABPC4 at multiple sites. Also participates in the maintenance of genomic and epigenomic stability by regulating the abundance of APEX2 via 'Lys-48'-linked ubiquitination. This is E3 ubiquitin-protein ligase makorin-3 (MKRN3) from Homo sapiens (Human).